Reading from the N-terminus, the 123-residue chain is Large ribosomal subunit protein eL8 (123 aa).

Belongs to the eukaryotic ribosomal protein eL8 family. May be present in up to 3 copies per 70S ribosome. Part of the 50S ribosomal subunit, where it binds 23S rRNA at its canonical site near the L1 stalk, as well as a possible second 50S binding site near helix 25 and a possible third site on the beak of the 30S subunit. Component of box C/D small ribonucleoprotein (sRNP) particles that contain rpl7ae, FlpA and nop5, plus a guide RNA. These sRNP particles form homodimers, giving rise to an asymmetric holoenzyme. Probably part of the RNase P complex.

It is found in the cytoplasm. Multifunctional RNA-binding protein that recognizes the K-turn motif in ribosomal RNA, the RNA component of RNase P, box H/ACA, box C/D and box C'/D' sRNAs. Component of the 70S ribosome. Component of a box C/D small ribonucleoprotein (sRNP) particle that is involved in pre-rRNA and tRNA processing. Utilizes the methyl donor S-adenosyl-L-methionine to catalyze the site-specific 2'-hydroxyl methylation of ribose moieties in rRNA and tRNA. Site specificity is provided by a guide RNA that base pairs with the substrate. Methylation occurs at a characteristic distance from the sequence involved in base pairing with the guide RNA. The sequence is that of Large ribosomal subunit protein eL8 from Pyrococcus furiosus (strain ATCC 43587 / DSM 3638 / JCM 8422 / Vc1).